The following is a 464-amino-acid chain: Siroheme synthase (464 aa).

Residues 1-203 (MEFLPLFHNL…GQGAEAERLL (203 aa)) form a precorrin-2 dehydrogenase /sirohydrochlorin ferrochelatase region. Residues 22–23 (EI) and 43–44 (PE) contribute to the NAD(+) site. Ser-128 carries the post-translational modification Phosphoserine. The segment at 216 to 464 (GEVYLVGAGP…AWFEGAQATV (249 aa)) is uroporphyrinogen-III C-methyltransferase. Pro-225 is an S-adenosyl-L-methionine binding site. Asp-248 serves as the catalytic Proton acceptor. Lys-270 (proton donor) is an active-site residue. S-adenosyl-L-methionine is bound by residues 301–303 (GGD), Ile-306, 331–332 (TA), Met-383, and Gly-412.

In the N-terminal section; belongs to the precorrin-2 dehydrogenase / sirohydrochlorin ferrochelatase family. It in the C-terminal section; belongs to the precorrin methyltransferase family.

The enzyme catalyses uroporphyrinogen III + 2 S-adenosyl-L-methionine = precorrin-2 + 2 S-adenosyl-L-homocysteine + H(+). It carries out the reaction precorrin-2 + NAD(+) = sirohydrochlorin + NADH + 2 H(+). The catalysed reaction is siroheme + 2 H(+) = sirohydrochlorin + Fe(2+). It participates in cofactor biosynthesis; adenosylcobalamin biosynthesis; precorrin-2 from uroporphyrinogen III: step 1/1. Its pathway is cofactor biosynthesis; adenosylcobalamin biosynthesis; sirohydrochlorin from precorrin-2: step 1/1. It functions in the pathway porphyrin-containing compound metabolism; siroheme biosynthesis; precorrin-2 from uroporphyrinogen III: step 1/1. The protein operates within porphyrin-containing compound metabolism; siroheme biosynthesis; siroheme from sirohydrochlorin: step 1/1. It participates in porphyrin-containing compound metabolism; siroheme biosynthesis; sirohydrochlorin from precorrin-2: step 1/1. Multifunctional enzyme that catalyzes the SAM-dependent methylations of uroporphyrinogen III at position C-2 and C-7 to form precorrin-2 via precorrin-1. Then it catalyzes the NAD-dependent ring dehydrogenation of precorrin-2 to yield sirohydrochlorin. Finally, it catalyzes the ferrochelation of sirohydrochlorin to yield siroheme. This chain is Siroheme synthase, found in Pseudomonas savastanoi pv. phaseolicola (strain 1448A / Race 6) (Pseudomonas syringae pv. phaseolicola (strain 1448A / Race 6)).